A 478-amino-acid polypeptide reads, in one-letter code: ATP synthase subunit beta (478 aa).

164-171 contributes to the ATP binding site; the sequence is GGAGVGKT.

This sequence belongs to the ATPase alpha/beta chains family. F-type ATPases have 2 components, CF(1) - the catalytic core - and CF(0) - the membrane proton channel. CF(1) has five subunits: alpha(3), beta(3), gamma(1), delta(1), epsilon(1). CF(0) has three main subunits: a(1), b(2) and c(9-12). The alpha and beta chains form an alternating ring which encloses part of the gamma chain. CF(1) is attached to CF(0) by a central stalk formed by the gamma and epsilon chains, while a peripheral stalk is formed by the delta and b chains.

The protein localises to the cell membrane. The catalysed reaction is ATP + H2O + 4 H(+)(in) = ADP + phosphate + 5 H(+)(out). Produces ATP from ADP in the presence of a proton gradient across the membrane. The catalytic sites are hosted primarily by the beta subunits. In Corynebacterium kroppenstedtii (strain DSM 44385 / JCM 11950 / CIP 105744 / CCUG 35717), this protein is ATP synthase subunit beta.